The sequence spans 1296 residues: MTLMNGDGAHEHQAEAEPKQNGHEMGDQTEEGNEQEVIVIQDTGFTVKVQVPGVETFSIQVSPQEMVQEIHQVLMDREDTCHRTCFSLQLDGNVLDNFAELKTIEGFQEGSVLKVVEEPYTVREARIHVRHIRDLLKSLDPSDAFNGVDCNSLSFLSVFTDGDLGDSGKKKKKGNELEQIDCTPPEYILPGSKERPLSPLQPQNKDWKPLQCLKVFTMSGWNPPPGNRKMHGDLMYLYVITMEDRHVSITASTRGFYLNQSTAYNFNPKPANPSFLSHSLVELLNQVSPTFKKNFAALQKKRVQRHPFERIATPFQLYSWTAPQVEHAMDCVRAEDAYTSRLGYEEHIPGQTRDWNEELQTTRELTRKNLPERLLRERAIFKVHSDFTAAATRGAMAVIDGNVMAINPSEETKMQMFIWNNIFFSLGFDVRDHYKDFGGDSAAYVSPTNDLNGVRAYNAVDVEGLYTLGTVVVDYRGYRVTAQSIIPGILEREQEQSVIYGSIDFGKTVVSHPKYLELLEKTSRPLKIQKHTVLNDKDEEVELCSSVECKGIIGNDGRHYILDLLRTFPPDLNFLPVEGETMPEECTKMGFPKEHRHKLCCLRQELVDAFVEHRYLLFMKLAAMHLMQQKASIKDVLGTEASTASEQLEGNGPSEEKEDLDLDGEAQLKQLEETMAAHKETVDTRSKEVILKACQAVGSISNTSFDIRFNPDIFSPGVRFPNESQEEVQNQKQLLKDAAAFVLTCQIPCLIKDCLDHSVVPMDGTTLAEAMHQRGINMRYLGKVIDVVRKFPVPSQLDHIYKILISEVITRSAKHIFKTYLQGVELSALSAAISHFLNCFLSSFPNSVAHLQSDELVSKKKSKKRRNRNLGNTDNTAWANTSPQELWKNICSEAKSYFDFNLECENVDQAMEVYNLQKISLLREICIKVGIQILLKEYNFDSKHKPTFTEEDILNIFPVVKHVNPKATDAFHFFQSGQAKVQQGYLKEGCELINEALNLFNNVYGAMHVEICACLRLLARLNYIMGDYSEALSNQQKAVLMSERIQGVEHPSTVQEYMHLALYCFANNQVSTSLNLLYRARYLMPLVYGEGHPEMALLDSNIGLVLHGVMEYDLSLRFLENALTINSKYHGVKSLKVALSHHLVARVYETKGEFRSALQHEKDGYTIYKNQLGEQHEKTRESSEYLKYLTQQAVALQRTMNEIYKNGSNANIMPLKFTAPSMTSVLEQLNIINGILFIPLSQKDLEHLKAEVQRRQQLQEAIKGAENHEAKTKEPEMSETSDSNINAASVAPESSD.

The interval 1-31 is disordered; it reads MTLMNGDGAHEHQAEAEPKQNGHEMGDQTEE. A compositionally biased stretch (basic and acidic residues) spans 8–26; that stretch reads GAHEHQAEAEPKQNGHEMG. Positions 333–575 constitute a Clu domain; sequence RAEDAYTSRL…RTFPPDLNFL (243 aa). Residues 662-689 adopt a coiled-coil conformation; sequence LDGEAQLKQLEETMAAHKETVDTRSKEV. TPR repeat units follow at residues 970–1003, 1012–1045, 1096–1129, and 1138–1171; these read AFHFFQSGQAKVQQGYLKEGCELINEALNLFNNV, CACLRLLARLNYIMGDYSEALSNQQKAVLMSERI, ALLDSNIGLVLHGVMEYDLSLRFLENALTINSKY, and ALSHHLVARVYETKGEFRSALQHEKDGYTIYKNQ. Residues 1242-1274 are a coiled coil; sequence QKDLEHLKAEVQRRQQLQEAIKGAENHEAKTKE. A disordered region spans residues 1261 to 1296; it reads AIKGAENHEAKTKEPEMSETSDSNINAASVAPESSD. Basic and acidic residues predominate over residues 1263–1276; sequence KGAENHEAKTKEPE. Over residues 1278 to 1296 the composition is skewed to polar residues; that stretch reads SETSDSNINAASVAPESSD.

Belongs to the CLU family.

It is found in the cytoplasm. The protein localises to the cytoplasmic granule. MRNA-binding protein involved in proper cytoplasmic distribution of mitochondria. Specifically binds mRNAs of nuclear-encoded mitochondrial proteins in the cytoplasm and regulates transport or translation of these transcripts close to mitochondria, playing a role in mitochondrial biogenesis. The sequence is that of Clustered mitochondria protein homolog from Xenopus tropicalis (Western clawed frog).